A 141-amino-acid chain; its full sequence is Large ribosomal subunit protein uL11 (141 aa).

Belongs to the universal ribosomal protein uL11 family. Part of the ribosomal stalk of the 50S ribosomal subunit. Interacts with L10 and the large rRNA to form the base of the stalk. L10 forms an elongated spine to which L12 dimers bind in a sequential fashion forming a multimeric L10(L12)X complex. Post-translationally, one or more lysine residues are methylated.

Functionally, forms part of the ribosomal stalk which helps the ribosome interact with GTP-bound translation factors. The sequence is that of Large ribosomal subunit protein uL11 from Chlorobium chlorochromatii (strain CaD3).